Here is a 5206-residue protein sequence, read N- to C-terminus: Multifunctional-autoprocessing repeats-in-toxin (5206 aa).

The N-terminal stretch at 1–19 (MGKPFWRSVEYFFTGNYSA) is a signal peptide. RtxA repeat units follow at residues 101-118 (GAAG…GDVS), 121-138 (GAAA…GNVT), 141-157 (GAGG…QGNL), 161-184 (GAGA…GDVT), 187-204 (GAGA…GNIT), 207-224 (GAGA…GDIT), 255-272 (GVGG…GDIH), 275-291 (GGGA…GSSF), 584-601 (GAGG…GNVY), 604-620 (GGGI…FGNT), 624-641 (GGGA…GDLT), 644-658 (GAGL…SKQG), 741-753 (AGGA…VGDG), 759-771 (MLGG…HISG), 782-798 (ALGG…GNTL), 801-816 (MGGG…DGTT), 820-835 (MVGG…NGDT), 841-855 (GVGN…GQTL), 858-875 (MGAA…TSIA), 877-891 (MIGA…GEGN), 896-910 (MGGL…GNGD), 915-932 (MVAE…MSVA), 934-950 (MLAK…GTTL), 972-984 (MIGQ…KVGN), 991-1006 (MVGK…DGTS), 1031-1043 (GKAN…GDGL), 1067-1079 (AAAK…HVGD), 1087-1102 (AGKG…GTTV), 1110-1122 (GNVM…GTTI), 1125-1142 (AKGK…LGVN), 1145-1159 (WGQA…DGDR), 1163-1179 (AKGE…GKEV), 1184-1199 (GKAN…DDYT), 1201-1217 (AWGK…GRNV), 1220-1236 (AKGE…GDSF), 1242-1256 (KGNI…MQVT), 1258-1275 (AKGK…LSVT), 1296-1313 (AWGK…LNVA), and 1315-1332 (MKGK…LNIN). The segment covering 1606–1626 (SQQANAVSEHATQNQASQNAL) has biased composition (polar residues). 2 disordered regions span residues 1606 to 1682 (SQQA…ESEA) and 1738 to 1895 (IAAA…EQEA). Basic and acidic residues predominate over residues 1627–1646 (SDKERAEADRQRLEQEKQKQ). Over residues 1652–1671 (GSQSQLESTDQQALGNNGQA) the composition is skewed to polar residues. Residues 1778 to 1805 (AEAKADAETRKADAVAKSNDAKQAESDA) show a composition bias toward basic and acidic residues. A compositionally biased stretch (polar residues) spans 1825-1834 (NKANQAQNDA). Residues 1835-1849 (KGTKQNEGDRPDREG) show a composition bias toward basic and acidic residues. The span at 1870–1880 (SHITTDSQTNA) shows a compositional bias: polar residues. A membrane localization region (MLD) region spans residues 2377–2461 (ELMSVTELLD…SLLNQVNSRL (85 aa)). The rho inactivation domain (RID) stretch occupies residues 2537 to 2901 (EYGQVVADTI…HQVTDVLDAL (365 aa)). The tract at residues 2998–3113 (VVLFLHGSGS…MPSMTKAITA (116 aa)) is ABH effector region. One can recognise a Peptidase C80 domain in the interval 4111-4295 (PTADGGESRF…AENNKVSLSW (185 aa)). 1D-myo-inositol hexakisphosphate-binding positions include 4117–4119 (ESR), 4144–4145 (KH), and R4175. The active-site For cysteine protease activity is the H4181. S4226 contributes to the 1D-myo-inositol hexakisphosphate binding site. Catalysis depends on C4230, which acts as the Nucleophile; for cysteine protease activity. 1D-myo-inositol hexakisphosphate-binding positions include 4259–4261 (SVR), 4272–4273 (RK), K4285, and K4290. 2 disordered regions span residues 4333–4362 (GAIG…ANNK) and 4738–4779 (LKEK…ETPD). A compositionally biased stretch (low complexity) spans 4750–4762 (SSVSVNGASVNSA).

Mg(2+) is required as a cofactor.

The protein resides in the secreted. The protein localises to the host cytoplasm. Its subcellular location is the host cytosol. It is found in the host cell membrane. The enzyme catalyses L-lysyl-/S-(2E,6E,10E)-geranylgeranyl-L-cysteinyl-[protein] + hexadecanoyl-CoA = N(6)-hexadecanoyl-L-lysyl-/S-(2E,6E,10E)-geranylgeranyl-L-cysteinyl-[protein] + CoA + H(+). It carries out the reaction L-lysyl-/S-(2E,6E,10E)-geranylgeranyl-L-cysteinyl-[protein] + dodecanoyl-CoA = N(6)-dodecanoyl-L-lysyl-/S-(2E,6E,10E)-geranylgeranyl-L-cysteinyl-[protein] + CoA + H(+). It catalyses the reaction L-lysyl-/S-(2E,6E,10E)-geranylgeranyl-L-cysteinyl-[protein] + decanoyl-CoA = N(6)-decanoyl-L-lysyl-/S-(2E,6E,10E)-geranylgeranyl-L-cysteinyl-[protein] + CoA + H(+). In terms of biological role, precursor of a multifunctional toxin that causes destruction of the actin cytoskeleton by covalent cross-linking of actin and inactivation of Rho GTPases when translocated into the host cytoplasm. Upon translocation into the host cell, undergoes autoprocessing in cis mediated by the peptidase C80 domain (also named CPD domain): the protease activity is activated upon binding inositol hexakisphosphate (InsP6) present at the host cell membrane and delivers the Cysteine protease domain-containing toxin F3 chain to the host cytosol. The Cysteine protease domain-containing toxin F3 chain will then further cleave and release effector toxin chains that cause disassembly of the actin cytoskeleton and enhance V.vulnificus colonization of the small intestine, possibly by facilitating evasion of phagocytic cells. Functionally, following autocatalytic cleavage in cis, this chain mediates processing in trans to release other individual toxin chains to the host cytosol. Released effector toxin chains cause disassembly of the actin cytoskeleton and enhance V.vulnificus colonization of the small intestine, possibly by facilitating evasion of phagocytic cells. Its function is as follows. Actin-directed toxin that catalyzes the covalent cross-linking of host cytoplasmic monomeric actin. Mediates the cross-link between 'Lys-50' of one monomer and 'Glu-270' of another actin monomer, resulting in formation of highly toxic actin oligomers that cause cell rounding. The toxin can be highly efficient at very low concentrations by acting on formin homology family proteins: toxic actin oligomers bind with high affinity to formins and adversely affect both nucleation and elongation abilities of formins, causing their potent inhibition in both profilin-dependent and independent manners. Acts as an acid--amino-acid ligase that transfers the gamma-phosphoryl group of ATP to the 'Glu-270' actin residue, resulting in the formation of an activated acyl phosphate intermediate. This intermediate is further hydrolyzed and the energy of hydrolysis is utilized for the formation of the amide bond between actin subunits. N-epsilon-fatty acyltransferase that mediates lysine-palmitoylation of host Rho GTPase proteins, with a strong preference for host Rac1. After delivery to the host cytosol, localizes to the host cell membrane where it palmitoylates host Rho GTPase proteins, resulting in loss of all active GTP-bound Rho and subsequent actin depolymerization. Prenylation of host Rac1 at the C-terminus is required for lysine-palmitoylation. In terms of biological role, indirectly activates the small GTPase CDC42. The polypeptide is Multifunctional-autoprocessing repeats-in-toxin (Vibrio vulnificus).